The primary structure comprises 289 residues: Oxaloacetate decarboxylase (289 aa).

Position 47 (serine 47) interacts with substrate. Position 85 (aspartate 85) interacts with Mg(2+). Residues arginine 156 and histidine 232 each contribute to the substrate site.

The protein belongs to the isocitrate lyase/PEP mutase superfamily. Oxaloacetate decarboxylase family. As to quaternary structure, homotetramer; dimer of dimers. Requires Mg(2+) as cofactor.

It catalyses the reaction oxaloacetate + H(+) = pyruvate + CO2. Its function is as follows. Catalyzes the decarboxylation of oxaloacetate into pyruvate. Seems to play a role in maintaining cellular concentrations of bicarbonate and pyruvate. This Rhodopseudomonas palustris (strain BisA53) protein is Oxaloacetate decarboxylase.